Here is an 85-residue protein sequence, read N- to C-terminus: UPF0335 protein WP0746 (85 aa).

Belongs to the UPF0335 family.

This Wolbachia pipientis subsp. Culex pipiens (strain wPip) protein is UPF0335 protein WP0746.